Consider the following 135-residue polypeptide: T-cell receptor gamma chain V region V108A (135 aa).

Residues 1–18 (MLLLRWFTSCCLWVFGLG) form the signal peptide. A v segment region spans residues 19–116 (QLEQTELSVT…EATYYCAVWM (98 aa)). The j segment stretch occupies residues 117–135 (RWSSGFHKVFAEGTKLIVI).

The polypeptide is T-cell receptor gamma chain V region V108A (Mus musculus (Mouse)).